The sequence spans 104 residues: Nucleoid-associated protein Bsph_0039 (104 aa).

Over residues 1–12 the composition is skewed to low complexity; the sequence is MRGMGNMQGMMK. Residues 1–22 form a disordered region; sequence MRGMGNMQGMMKKMQKMQKEMM.

This sequence belongs to the YbaB/EbfC family. As to quaternary structure, homodimer.

It localises to the cytoplasm. Its subcellular location is the nucleoid. Functionally, binds to DNA and alters its conformation. May be involved in regulation of gene expression, nucleoid organization and DNA protection. In Lysinibacillus sphaericus (strain C3-41), this protein is Nucleoid-associated protein Bsph_0039.